A 220-amino-acid chain; its full sequence is Charged multivesicular body protein 2a (220 aa).

The residue at position 1 (Met-1) is an N-acetylmethionine. Coiled-coil stretches lie at residues 12 to 52 (EELL…KMAK) and 195 to 220 (RAAE…LRRD). Residues 208 to 218 (ADLEERLKNLR) carry the MIT-interacting motif motif.

The protein belongs to the SNF7 family. In terms of assembly, probable core component of the endosomal sorting required for transport complex III (ESCRT-III). ESCRT-III components are thought to multimerize to form a flat lattice on the perimeter membrane of the endosome.

It is found in the late endosome membrane. It localises to the cytoplasm. Its function is as follows. Probable core component of the endosomal sorting required for transport complex III (ESCRT-III) which is involved in multivesicular bodies (MVBs) formation and sorting of endosomal cargo proteins into MVBs. MVBs contain intraluminal vesicles (ILVs) that are generated by invagination and scission from the limiting membrane of the endosome and mostly are delivered to lysosomes enabling degradation of membrane proteins, such as stimulated growth factor receptors, lysosomal enzymes and lipids. The chain is Charged multivesicular body protein 2a (CHMP2A) from Gallus gallus (Chicken).